We begin with the raw amino-acid sequence, 161 residues long: MASTKPTDQIKQLKDIFARFDMDKDGSLTQLELAALLRSLGIKPRGDQISLLLNQIDRNGNGSVEFDELVVAILPDINEEVLINQEQLMEVFRSFDRDGNGSITAAELAGSMAKMGHPLTYRELTEMMTEADSNGDGVISFNEFSHIMAKSAADFLGLTAS.

4 EF-hand domains span residues 8–43, 44–79, 83–118, and 119–154; these read DQIK…LGIK, PRGD…DINE, INQE…MGHP, and LTYR…SAAD. Residues Asp-21, Asp-23, Asp-25, Ser-27, Glu-32, Asp-57, Asn-59, Asn-61, Ser-63, Glu-68, Asp-96, Asp-98, Asn-100, Ser-102, Glu-107, Asp-132, Asn-134, Asp-136, and Glu-143 each coordinate Ca(2+).

In terms of biological role, potential calcium sensor. The polypeptide is Probable calcium-binding protein CML16 (CML16) (Arabidopsis thaliana (Mouse-ear cress)).